The primary structure comprises 122 residues: Large ribosomal subunit protein uL14c (122 aa).

It belongs to the universal ribosomal protein uL14 family. In terms of assembly, part of the 50S ribosomal subunit.

The protein resides in the plastid. It is found in the chloroplast. Its function is as follows. Binds to 23S rRNA. The protein is Large ribosomal subunit protein uL14c of Cycas taitungensis (Prince sago).